Here is a 257-residue protein sequence, read N- to C-terminus: Imidazole glycerol phosphate synthase subunit HisF (257 aa).

Catalysis depends on residues aspartate 11 and aspartate 130.

Belongs to the HisA/HisF family. In terms of assembly, heterodimer of HisH and HisF.

The protein localises to the cytoplasm. The catalysed reaction is 5-[(5-phospho-1-deoxy-D-ribulos-1-ylimino)methylamino]-1-(5-phospho-beta-D-ribosyl)imidazole-4-carboxamide + L-glutamine = D-erythro-1-(imidazol-4-yl)glycerol 3-phosphate + 5-amino-1-(5-phospho-beta-D-ribosyl)imidazole-4-carboxamide + L-glutamate + H(+). It participates in amino-acid biosynthesis; L-histidine biosynthesis; L-histidine from 5-phospho-alpha-D-ribose 1-diphosphate: step 5/9. In terms of biological role, IGPS catalyzes the conversion of PRFAR and glutamine to IGP, AICAR and glutamate. The HisF subunit catalyzes the cyclization activity that produces IGP and AICAR from PRFAR using the ammonia provided by the HisH subunit. The protein is Imidazole glycerol phosphate synthase subunit HisF of Bradyrhizobium diazoefficiens (strain JCM 10833 / BCRC 13528 / IAM 13628 / NBRC 14792 / USDA 110).